We begin with the raw amino-acid sequence, 206 residues long: Thymidylate kinase (206 aa).

ATP is bound at residue 16-23 (GIDGTGKS).

This sequence belongs to the thymidylate kinase family.

It carries out the reaction dTMP + ATP = dTDP + ADP. Phosphorylation of dTMP to form dTDP in both de novo and salvage pathways of dTTP synthesis. The sequence is that of Thymidylate kinase from Akkermansia muciniphila (strain ATCC BAA-835 / DSM 22959 / JCM 33894 / BCRC 81048 / CCUG 64013 / CIP 107961 / Muc).